Here is a 132-residue protein sequence, read N- to C-terminus: Large ribosomal subunit protein bL19 (132 aa).

The protein belongs to the bacterial ribosomal protein bL19 family.

In terms of biological role, this protein is located at the 30S-50S ribosomal subunit interface and may play a role in the structure and function of the aminoacyl-tRNA binding site. In Methylobacterium radiotolerans (strain ATCC 27329 / DSM 1819 / JCM 2831 / NBRC 15690 / NCIMB 10815 / 0-1), this protein is Large ribosomal subunit protein bL19.